A 381-amino-acid chain; its full sequence is Prostatic acid phosphatase (381 aa).

A signal peptide spans M1–A31. R42 lines the substrate pocket. H43 acts as the Nucleophile in catalysis. Residue R46 coordinates substrate. Residue N93 is glycosylated (N-linked (GlcNAc...) asparagine). Residue R110 participates in substrate binding. Cystine bridges form between C160-C371, C214-C312, and C346-C350. A glycan (N-linked (GlcNAc...) asparagine) is linked at N219. Position 288 (H288) interacts with substrate. D289 functions as the Proton donor in the catalytic mechanism. N332 carries N-linked (GlcNAc...) asparagine glycosylation.

It belongs to the histidine acid phosphatase family. Homodimer; dimer formation is required for phosphatase activity. In terms of processing, N-glycosylated. In terms of tissue distribution, expressed in prostate epithelium. Also expressed in the pelvic nerve and sacral spinal cord. Localizes in peptidergic and non-peptidergic nociceptive (pain-sensing) neurons.

The protein resides in the secreted. The protein localises to the cell membrane. It is found in the lysosome membrane. The enzyme catalyses a phosphate monoester + H2O = an alcohol + phosphate. The catalysed reaction is a ribonucleoside 5'-phosphate + H2O = a ribonucleoside + phosphate. It catalyses the reaction 1-(9Z-octadecenoyl)-sn-glycero-3-phosphate + H2O = 1-(9Z-octadecenoyl)-sn-glycerol + phosphate. It carries out the reaction O-phospho-L-tyrosyl-[protein] + H2O = L-tyrosyl-[protein] + phosphate. Inhibited by L(+)-tartrate. In terms of biological role, a non-specific tyrosine phosphatase that dephosphorylates a diverse number of substrates under acidic conditions (pH 4-6) including alkyl, aryl, and acyl orthophosphate monoesters and phosphorylated proteins. Has lipid phosphatase activity and inactivates lysophosphatidic acid in seminal plasma. In addition to its tyrosine phosphatase activity, also has ecto-5'-nucleotidase activity in dorsal root ganglion (DRG) neurons. Generates adenosine from AMP. This extracellular adenosine leads to a decrease in chronic pain by activating A1R in nociceptive neurons. The sequence is that of Prostatic acid phosphatase (Acp3) from Rattus norvegicus (Rat).